Reading from the N-terminus, the 367-residue chain is ABI gene family member 3 (367 aa).

A coiled-coil region spans residues 36–64; sequence CEDNYLQATDKRKALEETMAFTTQALASV. Positions 163-273 are disordered; sequence LSRTGTLSRK…LEVSQPPLEA (111 aa). Residues 206 to 225 are compositionally biased toward low complexity; it reads SAASSASSLASAGSAEGASG. Residues serine 216 and serine 219 each carry the phosphoserine modification. Positions 236–264 are enriched in pro residues; that stretch reads ATPPPPPVAPVTPPPPPLSAEVFLPPPPL. In terms of domain architecture, SH3 spans 309–367; that stretch reads SYLEKVVTLYPYTRQKDNELSFSEGTVICVTRRYSDGWCEGVSSEGTGFFPGNYVEPSC. Position 343 is a phosphoserine (serine 343).

It belongs to the ABI family. May interact with PAK1 and PAK2. Probably interacts with TARSH.

It is found in the cytoplasm. Its function is as follows. Inhibits ectopic tumor cell metastasis of SRD cells. In vitro, reduces cell motility. The chain is ABI gene family member 3 (Abi3) from Mus musculus (Mouse).